Reading from the N-terminus, the 149-residue chain is 3-dehydroquinate dehydratase (149 aa).

Tyrosine 26 (proton acceptor) is an active-site residue. Substrate-binding residues include asparagine 77, histidine 83, and aspartate 90. Histidine 103 functions as the Proton donor in the catalytic mechanism. Residues 104–105 (LS) and arginine 114 each bind substrate.

It belongs to the type-II 3-dehydroquinase family. Homododecamer.

The catalysed reaction is 3-dehydroquinate = 3-dehydroshikimate + H2O. Its pathway is metabolic intermediate biosynthesis; chorismate biosynthesis; chorismate from D-erythrose 4-phosphate and phosphoenolpyruvate: step 3/7. Functionally, catalyzes a trans-dehydration via an enolate intermediate. The sequence is that of 3-dehydroquinate dehydratase from Aeromonas salmonicida (strain A449).